The primary structure comprises 293 residues: Nucleotide-binding protein Dole_0503 (293 aa).

Residue 11-18 (GLSGSGKS) participates in ATP binding. 62-65 (DLRE) contacts GTP.

This sequence belongs to the RapZ-like family.

Its function is as follows. Displays ATPase and GTPase activities. The sequence is that of Nucleotide-binding protein Dole_0503 from Desulfosudis oleivorans (strain DSM 6200 / JCM 39069 / Hxd3) (Desulfococcus oleovorans).